The chain runs to 316 residues: 1-aminocyclopropane-1-carboxylate oxidase 4 (316 aa).

Residues 153-253 form the Fe2OG dioxygenase domain; it reads PNFGTKVSNY…RMSLASFYNP (101 aa). 3 residues coordinate Fe cation: H177, D179, and H234.

It belongs to the iron/ascorbate-dependent oxidoreductase family. Fe cation is required as a cofactor. As to expression, expressed in all of the floral organs examined apart from the sepals.

The enzyme catalyses 1-aminocyclopropane-1-carboxylate + L-ascorbate + O2 = ethene + L-dehydroascorbate + hydrogen cyanide + CO2 + 2 H2O. Its pathway is alkene biosynthesis; ethylene biosynthesis via S-adenosyl-L-methionine; ethylene from S-adenosyl-L-methionine: step 2/2. This is 1-aminocyclopropane-1-carboxylate oxidase 4 (ACO4) from Solanum lycopersicum (Tomato).